The primary structure comprises 444 residues: Tol-Pal system protein TolB (444 aa).

The first 19 residues, 1–19, serve as a signal peptide directing secretion; that stretch reads MRNIIYFILSLLFSVTSYA.

It belongs to the TolB family. In terms of assembly, the Tol-Pal system is composed of five core proteins: the inner membrane proteins TolA, TolQ and TolR, the periplasmic protein TolB and the outer membrane protein Pal. They form a network linking the inner and outer membranes and the peptidoglycan layer.

The protein localises to the periplasm. Functionally, part of the Tol-Pal system, which plays a role in outer membrane invagination during cell division and is important for maintaining outer membrane integrity. In Rickettsia conorii (strain ATCC VR-613 / Malish 7), this protein is Tol-Pal system protein TolB.